We begin with the raw amino-acid sequence, 182 residues long: ATP-dependent protease subunit HslV (182 aa).

Thr-12 is an active-site residue. Residues Ala-167, Cys-170, and Thr-173 each contribute to the Na(+) site.

This sequence belongs to the peptidase T1B family. HslV subfamily. A double ring-shaped homohexamer of HslV is capped on each side by a ring-shaped HslU homohexamer. The assembly of the HslU/HslV complex is dependent on binding of ATP.

It localises to the cytoplasm. The catalysed reaction is ATP-dependent cleavage of peptide bonds with broad specificity.. With respect to regulation, allosterically activated by HslU binding. Functionally, protease subunit of a proteasome-like degradation complex believed to be a general protein degrading machinery. The chain is ATP-dependent protease subunit HslV from Chlorobium chlorochromatii (strain CaD3).